Reading from the N-terminus, the 170-residue chain is Shikimate kinase (170 aa).

11–16 contributes to the ATP binding site; it reads LSGKST. Mg(2+) is bound at residue S15. The substrate site is built by D33, R57, and G79. R119 contacts ATP. Substrate is bound at residue R137.

This sequence belongs to the shikimate kinase family. Monomer. Requires Mg(2+) as cofactor.

Its subcellular location is the cytoplasm. The catalysed reaction is shikimate + ATP = 3-phosphoshikimate + ADP + H(+). It participates in metabolic intermediate biosynthesis; chorismate biosynthesis; chorismate from D-erythrose 4-phosphate and phosphoenolpyruvate: step 5/7. Catalyzes the specific phosphorylation of the 3-hydroxyl group of shikimic acid using ATP as a cosubstrate. This Clostridium botulinum (strain Okra / Type B1) protein is Shikimate kinase.